Reading from the N-terminus, the 413-residue chain is THAP domain-containing protein 5 (413 aa).

The segment at 1–85 (MPRYCAASYC…LKHTAVPTIF (85 aa)) adopts a THAP-type zinc-finger fold. A disordered region spans residues 84-118 (IFSSPDDEEKGSSQNSPQEIRREDQEETTKNVESK). A compositionally biased stretch (basic and acidic residues) spans 102 to 118 (EIRREDQEETTKNVESK). Residues 375–399 (RLRSLEALIGQLKQENLLSEEKLKI) are a coiled coil.

The protein resides in the nucleus. The polypeptide is THAP domain-containing protein 5 (THAP5) (Gallus gallus (Chicken)).